A 360-amino-acid chain; its full sequence is Phenylalanine--tRNA ligase alpha subunit (360 aa).

Glu-260 contacts Mg(2+).

Belongs to the class-II aminoacyl-tRNA synthetase family. Phe-tRNA synthetase alpha subunit type 1 subfamily. In terms of assembly, tetramer of two alpha and two beta subunits. Requires Mg(2+) as cofactor.

Its subcellular location is the cytoplasm. The enzyme catalyses tRNA(Phe) + L-phenylalanine + ATP = L-phenylalanyl-tRNA(Phe) + AMP + diphosphate + H(+). This chain is Phenylalanine--tRNA ligase alpha subunit, found in Rhizobium etli (strain ATCC 51251 / DSM 11541 / JCM 21823 / NBRC 15573 / CFN 42).